Reading from the N-terminus, the 480-residue chain is ATP synthase subunit beta 1 (480 aa).

An ATP-binding site is contributed by glycine 154 to threonine 161.

It belongs to the ATPase alpha/beta chains family. F-type ATPases have 2 components, CF(1) - the catalytic core - and CF(0) - the membrane proton channel. CF(1) has five subunits: alpha(3), beta(3), gamma(1), delta(1), epsilon(1). CF(0) has four main subunits: a(1), b(1), b'(1) and c(9-12).

The protein localises to the cell inner membrane. It catalyses the reaction ATP + H2O + 4 H(+)(in) = ADP + phosphate + 5 H(+)(out). Produces ATP from ADP in the presence of a proton gradient across the membrane. The catalytic sites are hosted primarily by the beta subunits. In Bradyrhizobium sp. (strain BTAi1 / ATCC BAA-1182), this protein is ATP synthase subunit beta 1.